Consider the following 367-residue polypeptide: Uroporphyrinogen decarboxylase (367 aa).

Residue methionine 1 is modified to N-acetylmethionine. 8 residues coordinate coproporphyrinogen I: arginine 37, alanine 39, arginine 41, arginine 50, aspartate 86, tyrosine 164, serine 219, and histidine 339. Arginine 37, alanine 39, and arginine 41 together coordinate coproporphyrinogen III. Residues aspartate 86, tyrosine 164, serine 219, and histidine 339 each coordinate coproporphyrinogen III.

The protein belongs to the uroporphyrinogen decarboxylase family. In terms of assembly, homodimer.

The protein localises to the cytoplasm. It localises to the cytosol. It carries out the reaction uroporphyrinogen III + 4 H(+) = coproporphyrinogen III + 4 CO2. It catalyses the reaction uroporphyrinogen I + 4 H(+) = coproporphyrinogen I + 4 CO2. It participates in porphyrin-containing compound metabolism; protoporphyrin-IX biosynthesis; coproporphyrinogen-III from 5-aminolevulinate: step 4/4. Its function is as follows. Catalyzes the sequential decarboxylation of the four acetate side chains of uroporphyrinogen to form coproporphyrinogen and participates in the fifth step in the heme biosynthetic pathway. Isomer I or isomer III of uroporphyrinogen may serve as substrate, but only coproporphyrinogen III can ultimately be converted to heme. In vitro also decarboxylates pentacarboxylate porphyrinogen I. The protein is Uroporphyrinogen decarboxylase of Homo sapiens (Human).